The sequence spans 234 residues: Large ribosomal subunit protein uL1 (234 aa).

It belongs to the universal ribosomal protein uL1 family. Part of the 50S ribosomal subunit.

Its function is as follows. Binds directly to 23S rRNA. The L1 stalk is quite mobile in the ribosome, and is involved in E site tRNA release. In terms of biological role, protein L1 is also a translational repressor protein, it controls the translation of the L11 operon by binding to its mRNA. In Anaeromyxobacter dehalogenans (strain 2CP-C), this protein is Large ribosomal subunit protein uL1.